Consider the following 147-residue polypeptide: Large ribosomal subunit protein uL15 (147 aa).

A disordered region spans residues 1–45; the sequence is MRLEDLRPTPGAMKKRKRVGRGPGSGHGKTSGRGHKGQKARGSGK. Positions 30–44 are enriched in basic residues; that stretch reads TSGRGHKGQKARGSG.

The protein belongs to the universal ribosomal protein uL15 family. As to quaternary structure, part of the 50S ribosomal subunit.

Functionally, binds to the 23S rRNA. This Thermotoga sp. (strain RQ2) protein is Large ribosomal subunit protein uL15.